The sequence spans 207 residues: MLNKLSRLLDEAGISLTDHQKNQLVAYVGLLDKWNKAYNLTSVRDPNEMLVRHILDSIIVAPYLQGSRFIDVGTGPGLPGIPLAIVRPESHFTLLDSLGKRVRFLRQVQHELKLDNVTPVQSRVEAFPAEPPFDGVISRAFASLNDMVSWCHHLPAANGHFYALKGLAQKDEMENLPEGYGIAEVIELHVPQLEGERHLVVIQPKSR.

Residues Gly73, Leu78, 124–125 (VE), and Arg139 contribute to the S-adenosyl-L-methionine site.

This sequence belongs to the methyltransferase superfamily. RNA methyltransferase RsmG family.

Its subcellular location is the cytoplasm. It catalyses the reaction guanosine(527) in 16S rRNA + S-adenosyl-L-methionine = N(7)-methylguanosine(527) in 16S rRNA + S-adenosyl-L-homocysteine. Specifically methylates the N7 position of guanine in position 527 of 16S rRNA. The sequence is that of Ribosomal RNA small subunit methyltransferase G from Klebsiella pneumoniae (strain 342).